Consider the following 187-residue polypeptide: Capsid protein VP10 (187 aa).

C45 and C51 are joined by a disulfide.

It is found in the virion. Its function is as follows. VP10 self-assembles, together with capsid protein VP4, to form an icosahedral caspid of 87 nm in diameter, with a T=43 symmetry and composed of 420 hexamers and 12 pentamers. VP4 proteins arrange into hexons, while VP10 proteins form the pentameric densities located at the 5-fold axes in the virion. The stoichiometry of VP4:VP10 is 42:1. The polypeptide is Capsid protein VP10 (Sulfolobus polyhedral virus 1 (SPV1)).